Reading from the N-terminus, the 284-residue chain is Cell division protein ZipA (284 aa).

Position 1 (methionine 1) is a topological domain, periplasmic. Residues 2-22 traverse the membrane as a helical segment; the sequence is EIGLREWLIVIGIIVIAGILF. Topologically, residues 23–284 are cytoplasmic; that stretch reads DGWRRMRGGK…FERRALTQKR (262 aa). The tract at residues 47–140 is disordered; the sequence is PDDEGSAELL…SASHSDKDQP (94 aa). 3 stretches are compositionally biased toward basic and acidic residues: residues 62–75, 83–102, and 119–140; these read LDTHKEPQLDEHDL, REPRESSSSKRGKRGGEPHQ, and SRDDDFPVEESKSASHSDKDQP.

The protein belongs to the ZipA family. As to quaternary structure, interacts with FtsZ via their C-terminal domains.

It is found in the cell inner membrane. Its function is as follows. Essential cell division protein that stabilizes the FtsZ protofilaments by cross-linking them and that serves as a cytoplasmic membrane anchor for the Z ring. Also required for the recruitment to the septal ring of downstream cell division proteins. The protein is Cell division protein ZipA of Pseudomonas fluorescens (strain ATCC BAA-477 / NRRL B-23932 / Pf-5).